Consider the following 216-residue polypeptide: Protein-methionine-sulfoxide reductase heme-binding subunit MsrQ (216 aa).

5 helical membrane passes run 16–36, 48–68, 82–102, 119–139, and 155–175; these read IWAL…LGAT, EHLL…ITPI, ALGL…MVLD, FITI…TSNI, and LVYV…KVVG.

The protein belongs to the MsrQ family. Heterodimer of a catalytic subunit (MsrP) and a heme-binding subunit (MsrQ). FMN serves as cofactor. Requires heme b as cofactor.

The protein resides in the cell inner membrane. Functionally, part of the MsrPQ system that repairs oxidized periplasmic proteins containing methionine sulfoxide residues (Met-O), using respiratory chain electrons. Thus protects these proteins from oxidative-stress damage caused by reactive species of oxygen and chlorine generated by the host defense mechanisms. MsrPQ is essential for the maintenance of envelope integrity under bleach stress, rescuing a wide series of structurally unrelated periplasmic proteins from methionine oxidation. MsrQ provides electrons for reduction to the reductase catalytic subunit MsrP, using the quinone pool of the respiratory chain. The protein is Protein-methionine-sulfoxide reductase heme-binding subunit MsrQ of Rhizobium meliloti (strain 1021) (Ensifer meliloti).